The sequence spans 376 residues: Erythronate-4-phosphate dehydrogenase (376 aa).

Residues Ser-45 and Thr-67 each contribute to the substrate site. Asp-147 lines the NAD(+) pocket. Arg-209 is an active-site residue. Asp-233 provides a ligand contact to NAD(+). The active site involves Glu-238. His-255 functions as the Proton donor in the catalytic mechanism. Gly-258 serves as a coordination point for NAD(+). A substrate-binding site is contributed by Tyr-259.

The protein belongs to the D-isomer specific 2-hydroxyacid dehydrogenase family. PdxB subfamily. Homodimer.

The protein resides in the cytoplasm. The catalysed reaction is 4-phospho-D-erythronate + NAD(+) = (R)-3-hydroxy-2-oxo-4-phosphooxybutanoate + NADH + H(+). It participates in cofactor biosynthesis; pyridoxine 5'-phosphate biosynthesis; pyridoxine 5'-phosphate from D-erythrose 4-phosphate: step 2/5. Its function is as follows. Catalyzes the oxidation of erythronate-4-phosphate to 3-hydroxy-2-oxo-4-phosphonooxybutanoate. The chain is Erythronate-4-phosphate dehydrogenase from Shewanella sp. (strain W3-18-1).